The primary structure comprises 912 residues: E3 ubiquitin-protein ligase HACE1 (912 aa).

ANK repeat units lie at residues 23 to 55, 64 to 93, 97 to 126, 130 to 159, 163 to 192, 196 to 226, and 228 to 253; these read LPED…NSKF, VKRS…DPNY, SGCT…DVNI, EGLT…NVDV, MGQT…DINR, SGAT…YLPD, and NGVT…QHHP. One can recognise an HECT domain in the interval 577-912; the sequence is NCEKLKQGIA…HCGSYGYTMA (336 aa). The Glycyl thioester intermediate role is filled by Cys879.

The protein localises to the golgi apparatus. The protein resides in the golgi stack membrane. It localises to the cytoplasm. Its subcellular location is the endoplasmic reticulum. The catalysed reaction is S-ubiquitinyl-[E2 ubiquitin-conjugating enzyme]-L-cysteine + [acceptor protein]-L-lysine = [E2 ubiquitin-conjugating enzyme]-L-cysteine + N(6)-ubiquitinyl-[acceptor protein]-L-lysine.. The protein operates within protein modification; protein ubiquitination. E3 ubiquitin-protein ligase involved in Golgi membrane fusion and regulation of small GTPases. Acts as a regulator of Golgi membrane dynamics during the cell cycle: recruited to Golgi membrane by Rab proteins and regulates postmitotic Golgi membrane fusion. Acts by mediating ubiquitination during mitotic Golgi disassembly, ubiquitination serving as a signal for Golgi reassembly later, after cell division. The chain is E3 ubiquitin-protein ligase HACE1 (hace1) from Xenopus tropicalis (Western clawed frog).